A 482-amino-acid chain; its full sequence is Probable glycine dehydrogenase (decarboxylating) subunit 2 (482 aa).

Lysine 267 carries the N6-(pyridoxal phosphate)lysine modification.

The protein belongs to the GcvP family. C-terminal subunit subfamily. The glycine cleavage system is composed of four proteins: P, T, L and H. In this organism, the P 'protein' is a heterodimer of two subunits. It depends on pyridoxal 5'-phosphate as a cofactor.

The enzyme catalyses N(6)-[(R)-lipoyl]-L-lysyl-[glycine-cleavage complex H protein] + glycine + H(+) = N(6)-[(R)-S(8)-aminomethyldihydrolipoyl]-L-lysyl-[glycine-cleavage complex H protein] + CO2. The glycine cleavage system catalyzes the degradation of glycine. The P protein binds the alpha-amino group of glycine through its pyridoxal phosphate cofactor; CO(2) is released and the remaining methylamine moiety is then transferred to the lipoamide cofactor of the H protein. The protein is Probable glycine dehydrogenase (decarboxylating) subunit 2 of Aquifex aeolicus (strain VF5).